The following is a 152-amino-acid chain: B3 domain-containing protein At1g10455 (152 aa).

Positions 24–131 form a DNA-binding region, TF-B3; it reads LKKKLSDSDL…EVKFKHFKSQ (108 aa).

Its subcellular location is the nucleus. The sequence is that of B3 domain-containing protein At1g10455 from Arabidopsis thaliana (Mouse-ear cress).